A 295-amino-acid chain; its full sequence is Pyridoxal 5'-phosphate synthase subunit PdxS (295 aa).

Asp25 contributes to the D-ribose 5-phosphate binding site. Catalysis depends on Lys82, which acts as the Schiff-base intermediate with D-ribose 5-phosphate. A D-ribose 5-phosphate-binding site is contributed by Gly154. Arg166 is a binding site for D-glyceraldehyde 3-phosphate. Residues Gly215 and 236 to 237 (GS) contribute to the D-ribose 5-phosphate site.

Belongs to the PdxS/SNZ family. In the presence of PdxT, forms a dodecamer of heterodimers.

The catalysed reaction is aldehydo-D-ribose 5-phosphate + D-glyceraldehyde 3-phosphate + L-glutamine = pyridoxal 5'-phosphate + L-glutamate + phosphate + 3 H2O + H(+). It participates in cofactor biosynthesis; pyridoxal 5'-phosphate biosynthesis. Catalyzes the formation of pyridoxal 5'-phosphate from ribose 5-phosphate (RBP), glyceraldehyde 3-phosphate (G3P) and ammonia. The ammonia is provided by the PdxT subunit. Can also use ribulose 5-phosphate and dihydroxyacetone phosphate as substrates, resulting from enzyme-catalyzed isomerization of RBP and G3P, respectively. This is Pyridoxal 5'-phosphate synthase subunit PdxS from Bacillus cereus (strain G9842).